Consider the following 313-residue polypeptide: Foldase protein PrsA (313 aa).

Residues 1 to 20 (MKKKLLAGAITLLSVATLAA) form the signal peptide. Cys-21 carries N-palmitoyl cysteine lipidation. Residue Cys-21 is the site of S-diacylglycerol cysteine attachment. The PpiC domain occupies 143–241 (TPDVTAQIIR…SQYYIVKLTK (99 aa)).

This sequence belongs to the PrsA family.

Its subcellular location is the cell membrane. It carries out the reaction [protein]-peptidylproline (omega=180) = [protein]-peptidylproline (omega=0). Plays a major role in protein secretion by helping the post-translocational extracellular folding of several secreted proteins. This is Foldase protein PrsA from Streptococcus pneumoniae (strain P1031).